The primary structure comprises 133 residues: Small ribosomal subunit protein uS8 (133 aa).

Belongs to the universal ribosomal protein uS8 family. As to quaternary structure, part of the 30S ribosomal subunit.

Functionally, one of the primary rRNA binding proteins, it binds directly to 16S rRNA central domain where it helps coordinate assembly of the platform of the 30S subunit. In Metallosphaera sedula (strain ATCC 51363 / DSM 5348 / JCM 9185 / NBRC 15509 / TH2), this protein is Small ribosomal subunit protein uS8.